Reading from the N-terminus, the 75-residue chain is Translation initiation factor IF-1 (75 aa).

The S1-like domain maps to 1 to 75 (MANLPKEQKL…SKGRIVYRFK (75 aa)).

Belongs to the IF-1 family. As to quaternary structure, component of the 30S ribosomal translation pre-initiation complex which assembles on the 30S ribosome in the order IF-2 and IF-3, IF-1 and N-formylmethionyl-tRNA(fMet); mRNA recruitment can occur at any time during PIC assembly.

The protein resides in the cytoplasm. Functionally, one of the essential components for the initiation of protein synthesis. Stabilizes the binding of IF-2 and IF-3 on the 30S subunit to which N-formylmethionyl-tRNA(fMet) subsequently binds. Helps modulate mRNA selection, yielding the 30S pre-initiation complex (PIC). Upon addition of the 50S ribosomal subunit IF-1, IF-2 and IF-3 are released leaving the mature 70S translation initiation complex. The polypeptide is Translation initiation factor IF-1 (Mesomycoplasma hyopneumoniae (strain 232) (Mycoplasma hyopneumoniae)).